The chain runs to 302 residues: MQTRNYLLYDVFTTERLAGNPLAVVLDCKGLDTIAMQAIAREFNLSETVFVLPPDNPKHKNRIRIFTPDYEMPFAGHPTVGSAIALAELAGESGAGIFVLEENIGPVRCAVSRHDGAAFAEFDLAKLPEPLQLEADPQAIGAALGLAPHEIGFENHRVAFWSAGVPYVTIPVANLEAAGRIRLDNQAWSELAPRKSEWAFASPYVYCRETVNHESAFHVRMIVPGTPSYEDPATGSAAAAFAGAIMHFDAPTDGISQLWIEQGLEMGRPSRIRLELTVQGGKLASARIGGHAVKVADGKLFI.

Glu-47 is a catalytic residue.

The protein belongs to the PhzF family.

This is an uncharacterized protein from Mesorhizobium japonicum (strain LMG 29417 / CECT 9101 / MAFF 303099) (Mesorhizobium loti (strain MAFF 303099)).